A 234-amino-acid polypeptide reads, in one-letter code: Sugar fermentation stimulation protein A (234 aa).

The segment at residues 201–220 is a DNA-binding region (H-T-H motif); that stretch reads LLSEAQQRGVEILAYKAEIS.

It belongs to the SfsA family.

Functionally, binds to DNA non-specifically. Could be a regulatory factor involved in maltose metabolism. This chain is Sugar fermentation stimulation protein A, found in Shigella dysenteriae serotype 1 (strain Sd197).